Consider the following 337-residue polypeptide: Glyceraldehyde-3-phosphate dehydrogenase 2 (337 aa).

Residues 11-12 (RI), D35, R80, and T122 each bind NADP(+). Residues 153-155 (SCT), T184, R199, 212-213 (TG), and R235 each bind D-glyceraldehyde 3-phosphate. Catalysis depends on C154, which acts as the Nucleophile. N317 is an NADP(+) binding site.

Belongs to the glyceraldehyde-3-phosphate dehydrogenase family. In terms of assembly, homotetramer.

It localises to the cytoplasm. It carries out the reaction D-glyceraldehyde 3-phosphate + phosphate + NADP(+) = (2R)-3-phospho-glyceroyl phosphate + NADPH + H(+). The enzyme catalyses D-glyceraldehyde 3-phosphate + phosphate + NAD(+) = (2R)-3-phospho-glyceroyl phosphate + NADH + H(+). The protein operates within carbohydrate biosynthesis; Calvin cycle. Gap2 has a major role in carbon fixation as a component of the Calvin cycle. Catalyzes the oxidative phosphorylation of glyceraldehyde 3-phosphate (G3P) to 1,3-bisphosphoglycerate (BPG) using the cofactor NAD. The first reaction step involves the formation of a hemiacetal intermediate between G3P and a cysteine residue, and this hemiacetal intermediate is then oxidized to a thioester, with concomitant reduction of NAD to NADH. The reduced NADH is then exchanged with the second NAD, and the thioester is attacked by a nucleophilic inorganic phosphate to produce BPG. The chain is Glyceraldehyde-3-phosphate dehydrogenase 2 (gap2) from Trichormus variabilis (strain ATCC 29413 / PCC 7937) (Anabaena variabilis).